The following is a 62-amino-acid chain: MRPMQLDMLSEMDDAGSSMAMDVDDLEAMEILNEGGLVSDNKLADADFFNKFDDDFDDTDIN.

Interacts with the COP9 signalosome. In terms of tissue distribution, expressed in roots, flowers, siliques, stems, leaves and seeds. In flowers, detected in petals, anthers and pistils.

Functionally, mediates responses to the synthetic auxin 2,4-dichlorophenoxyacetic acid (2,4-D). Not involved in the response to indole-3-acetic acid (IAA). Interacts with RUB modification-related components and may regulate the cullin-ring ubiquitin E3 ligase complex (CRL) activity. The chain is Small acidic protein 1 (SMAP1) from Arabidopsis thaliana (Mouse-ear cress).